Here is a 387-residue protein sequence, read N- to C-terminus: Succinate--CoA ligase [ADP-forming] subunit beta (387 aa).

In terms of domain architecture, ATP-grasp spans K9–K236. Residues K45, G52–G54, S94, and E99 contribute to the ATP site. Mg(2+) contacts are provided by N191 and D205. Substrate contacts are provided by residues N256 and G318–T320.

Belongs to the succinate/malate CoA ligase beta subunit family. In terms of assembly, heterotetramer of two alpha and two beta subunits. The cofactor is Mg(2+).

It catalyses the reaction succinate + ATP + CoA = succinyl-CoA + ADP + phosphate. The enzyme catalyses GTP + succinate + CoA = succinyl-CoA + GDP + phosphate. It functions in the pathway carbohydrate metabolism; tricarboxylic acid cycle; succinate from succinyl-CoA (ligase route): step 1/1. Succinyl-CoA synthetase functions in the citric acid cycle (TCA), coupling the hydrolysis of succinyl-CoA to the synthesis of either ATP or GTP and thus represents the only step of substrate-level phosphorylation in the TCA. The beta subunit provides nucleotide specificity of the enzyme and binds the substrate succinate, while the binding sites for coenzyme A and phosphate are found in the alpha subunit. In Mycobacterium tuberculosis (strain CDC 1551 / Oshkosh), this protein is Succinate--CoA ligase [ADP-forming] subunit beta.